We begin with the raw amino-acid sequence, 830 residues long: Ribosome biogenesis protein ERB1 (830 aa).

The tract at residues Met-1–Lys-141 is disordered. Composition is skewed to acidic residues over residues Val-35 to Gly-44 and Met-52 to Ser-109. Residues Glu-131 to Lys-141 show a composition bias toward basic and acidic residues. WD repeat units lie at residues Pro-481–Arg-520, Leu-523–Ile-563, Lys-660–Thr-698, Ser-701–Lys-740, Tyr-744–Gln-783, and Ile-799–Ser-830.

Belongs to the WD repeat BOP1/ERB1 family. In terms of assembly, component of the NOP7 complex, composed of ERB1, NOP7 and YTM1. The complex is held together by ERB1, which interacts with NOP7 via its N-terminal domain and with YTM1 via a high-affinity interaction between the seven-bladed beta-propeller domains of the 2 proteins. The NOP7 complex associates with the 66S pre-ribosome.

The protein resides in the nucleus. It localises to the nucleolus. It is found in the nucleoplasm. Component of the NOP7 complex, which is required for maturation of the 25S and 5.8S ribosomal RNAs and formation of the 60S ribosome. This chain is Ribosome biogenesis protein ERB1, found in Cryptococcus neoformans var. neoformans serotype D (strain B-3501A) (Filobasidiella neoformans).